The sequence spans 349 residues: Bifunctional protein FolKE (349 aa).

The segment at 1–226 is 2-amino-4-hydroxy-6-hydroxymethyldihydropteridine pyrophosphokinase; sequence MQTTYLSMGS…LFEIDSSKTD (226 aa). Residues 226–349 are GTP cyclohydrolase 1; that stretch reads DSIVLIKDIP…KRMEFLESLL (124 aa).

The protein in the N-terminal section; belongs to the HPPK family. It in the C-terminal section; belongs to the GTP cyclohydrolase I family. As to quaternary structure, homomer.

The enzyme catalyses 6-hydroxymethyl-7,8-dihydropterin + ATP = (7,8-dihydropterin-6-yl)methyl diphosphate + AMP + H(+). It catalyses the reaction GTP + H2O = 7,8-dihydroneopterin 3'-triphosphate + formate + H(+). It participates in cofactor biosynthesis; 7,8-dihydroneopterin triphosphate biosynthesis; 7,8-dihydroneopterin triphosphate from GTP: step 1/1. It functions in the pathway cofactor biosynthesis; tetrahydrofolate biosynthesis; 2-amino-4-hydroxy-6-hydroxymethyl-7,8-dihydropteridine diphosphate from 7,8-dihydroneopterin triphosphate: step 4/4. The protein is Bifunctional protein FolKE (folKE) of Lactococcus lactis subsp. lactis (strain IL1403) (Streptococcus lactis).